Reading from the N-terminus, the 296-residue chain is 4-hydroxybenzoate octaprenyltransferase (296 aa).

The next 8 membrane-spanning stretches (helical) occupy residues 28–48 (PIGI…AGLG), 52–72 (LANV…GCCI), 102–122 (ALAL…CTNS), 145–167 (TYYP…FTAA), 174–196 (SAWL…YAMV), 219–239 (MIIL…GSRF), 241–261 (LGGW…WEYW), and 275–295 (FLHN…DYAL).

Belongs to the UbiA prenyltransferase family. Mg(2+) serves as cofactor.

It is found in the cell inner membrane. It catalyses the reaction all-trans-octaprenyl diphosphate + 4-hydroxybenzoate = 4-hydroxy-3-(all-trans-octaprenyl)benzoate + diphosphate. Its pathway is cofactor biosynthesis; ubiquinone biosynthesis. Functionally, catalyzes the prenylation of para-hydroxybenzoate (PHB) with an all-trans polyprenyl group. Mediates the second step in the final reaction sequence of ubiquinone-8 (UQ-8) biosynthesis, which is the condensation of the polyisoprenoid side chain with PHB, generating the first membrane-bound Q intermediate 3-octaprenyl-4-hydroxybenzoate. This chain is 4-hydroxybenzoate octaprenyltransferase, found in Pseudomonas putida (strain W619).